Reading from the N-terminus, the 293-residue chain is Nucleotide-binding protein Bcer98_3698 (293 aa).

14–21 contributes to the ATP binding site; that stretch reads GMSGAGKT. 65 to 68 is a GTP binding site; it reads DLRG.

The protein belongs to the RapZ-like family.

Functionally, displays ATPase and GTPase activities. The sequence is that of Nucleotide-binding protein Bcer98_3698 from Bacillus cytotoxicus (strain DSM 22905 / CIP 110041 / 391-98 / NVH 391-98).